Reading from the N-terminus, the 311-residue chain is Putative RNA-binding protein R05D3.8 (311 aa).

The 81-residue stretch at Lys-155–Lys-235 folds into the RRM domain. Polar residues predominate over residues Thr-261–His-270. A disordered region spans residues Thr-261–Trp-311.

The protein is Putative RNA-binding protein R05D3.8 of Caenorhabditis elegans.